Consider the following 227-residue polypeptide: Cytochrome c oxidase subunit 2 (227 aa).

The Mitochondrial intermembrane portion of the chain corresponds to 1-14; the sequence is MAYPVQLGFQDAAS. A helical membrane pass occupies residues 15-45; that stretch reads PIMEELLYFHDHTLMIVFLISSLVLYIISLM. Residues 46–59 lie on the Mitochondrial matrix side of the membrane; that stretch reads LTTKLMHTSTMDAQ. A helical transmembrane segment spans residues 60–87; that stretch reads EVETVWTILPAIILILIALPSLRILYMM. Over 88–227 the chain is Mitochondrial intermembrane; it reads DEITTPSLTL…HFEEWLLSMF (140 aa). 6 residues coordinate Cu cation: H161, C196, E198, C200, H204, and M207. E198 is a Mg(2+) binding site.

This sequence belongs to the cytochrome c oxidase subunit 2 family. Component of the cytochrome c oxidase (complex IV, CIV), a multisubunit enzyme composed of 14 subunits. The complex is composed of a catalytic core of 3 subunits MT-CO1, MT-CO2 and MT-CO3, encoded in the mitochondrial DNA, and 11 supernumerary subunits COX4I, COX5A, COX5B, COX6A, COX6B, COX6C, COX7A, COX7B, COX7C, COX8 and NDUFA4, which are encoded in the nuclear genome. The complex exists as a monomer or a dimer and forms supercomplexes (SCs) in the inner mitochondrial membrane with NADH-ubiquinone oxidoreductase (complex I, CI) and ubiquinol-cytochrome c oxidoreductase (cytochrome b-c1 complex, complex III, CIII), resulting in different assemblies (supercomplex SCI(1)III(2)IV(1) and megacomplex MCI(2)III(2)IV(2)). Found in a complex with TMEM177, COA6, COX18, COX20, SCO1 and SCO2. Interacts with TMEM177 in a COX20-dependent manner. Interacts with COX20. Interacts with COX16. Cu cation is required as a cofactor.

It localises to the mitochondrion inner membrane. The catalysed reaction is 4 Fe(II)-[cytochrome c] + O2 + 8 H(+)(in) = 4 Fe(III)-[cytochrome c] + 2 H2O + 4 H(+)(out). Functionally, component of the cytochrome c oxidase, the last enzyme in the mitochondrial electron transport chain which drives oxidative phosphorylation. The respiratory chain contains 3 multisubunit complexes succinate dehydrogenase (complex II, CII), ubiquinol-cytochrome c oxidoreductase (cytochrome b-c1 complex, complex III, CIII) and cytochrome c oxidase (complex IV, CIV), that cooperate to transfer electrons derived from NADH and succinate to molecular oxygen, creating an electrochemical gradient over the inner membrane that drives transmembrane transport and the ATP synthase. Cytochrome c oxidase is the component of the respiratory chain that catalyzes the reduction of oxygen to water. Electrons originating from reduced cytochrome c in the intermembrane space (IMS) are transferred via the dinuclear copper A center (CU(A)) of subunit 2 and heme A of subunit 1 to the active site in subunit 1, a binuclear center (BNC) formed by heme A3 and copper B (CU(B)). The BNC reduces molecular oxygen to 2 water molecules using 4 electrons from cytochrome c in the IMS and 4 protons from the mitochondrial matrix. The chain is Cytochrome c oxidase subunit 2 (MT-CO2) from Propithecus tattersalli (Golden-crowned Sifaka).